The sequence spans 795 residues: Protein ROOT HAIR DEFECTIVE 3 homolog 1 (795 aa).

The Cytoplasmic portion of the chain corresponds to 1-682 (MDADKSEGCC…EANRRGNNWL (682 aa)). In terms of domain architecture, GB1/RHD3-type G spans 39–254 (GLSYAVVSIM…IAPGGLAGDR (216 aa)). A GTP-binding site is contributed by 49–56 (GPQSSGKS). Residues 218–244 (VALSSYEEKEEQFKEQIASLRQRFMHS) are a coiled coil. A helical membrane pass occupies residues 683–703 (PPPWAILALIVLGFNEFMTLL). Over 704–706 (RNP) the chain is Lumenal. The chain crosses the membrane as a helical span at residues 707 to 727 (LYLGVMFVAFLLAKALWTQLD). Residues 728–795 (IPGEFRNGAL…PDHKSSSKED (68 aa)) are Cytoplasmic-facing. Residues 761-795 (QGEDPPAANPENRRSSNNTSSSENPPDHKSSSKED) are disordered. Over residues 775 to 784 (SSNNTSSSEN) the composition is skewed to low complexity. The segment covering 785–795 (PPDHKSSSKED) has biased composition (basic and acidic residues).

It belongs to the TRAFAC class dynamin-like GTPase superfamily. GB1/RHD3 GTPase family. RHD3 subfamily. As to expression, specifically expressed in flowers.

It localises to the endoplasmic reticulum membrane. Its function is as follows. Probable GTP-binding protein that may be involved in cell development. The sequence is that of Protein ROOT HAIR DEFECTIVE 3 homolog 1 from Arabidopsis thaliana (Mouse-ear cress).